The primary structure comprises 442 residues: Tyrosine--tRNA ligase (442 aa).

L-tyrosine is bound at residue Tyr-55. The 'HIGH' region motif lies at 60–69 (PTAPSLHLGN). L-tyrosine contacts are provided by Tyr-190 and Gln-194. Positions 250-254 (KFGKS) match the 'KMSKS' region motif. Lys-253 serves as a coordination point for ATP. An S4 RNA-binding domain is found at 373-438 (VAIAQALVDT…GKKTLAGVFV (66 aa)).

Belongs to the class-I aminoacyl-tRNA synthetase family. TyrS type 1 subfamily. As to quaternary structure, homodimer.

The protein resides in the cytoplasm. The enzyme catalyses tRNA(Tyr) + L-tyrosine + ATP = L-tyrosyl-tRNA(Tyr) + AMP + diphosphate + H(+). Functionally, catalyzes the attachment of tyrosine to tRNA(Tyr) in a two-step reaction: tyrosine is first activated by ATP to form Tyr-AMP and then transferred to the acceptor end of tRNA(Tyr). This Leifsonia xyli subsp. xyli (strain CTCB07) protein is Tyrosine--tRNA ligase.